The chain runs to 611 residues: Chaperone protein DnaK (611 aa).

Threonine 173 bears the Phosphothreonine; by autocatalysis mark. Over residues 577–592 the composition is skewed to low complexity; it reads QAAAGQAEGAEGAQDA. The tract at residues 577–598 is disordered; it reads QAAAGQAEGAEGAQDAGAKKDN.

It belongs to the heat shock protein 70 family.

In terms of biological role, acts as a chaperone. This is Chaperone protein DnaK from Bacillus anthracis (strain A0248).